The primary structure comprises 662 residues: ATP-dependent RNA helicase DDX3X (662 aa).

S2 is modified (N-acetylserine). The required for TBK1 and IKBKE-dependent IFNB1 activation stretch occupies residues 2–139; sequence SHVAVENALG…KSDEDDWSKP (138 aa). The Nuclear export signal signature appears at 12–21; that stretch reads LDQQFAGLDL. The segment at 19–144 is disordered; sequence LDLNSSDNQS…DWSKPLPPSE (126 aa). Residues 21–34 show a composition bias toward polar residues; it reads LNSSDNQSGGSTAS. Positions 38-44 are interaction with EIF4E; sequence YIPPHLR. Basic and acidic residues predominate over residues 44 to 68; the sequence is RNREATKGFYDKDSSGWSSSKDKDA. K55 bears the N6-acetyllysine mark. The span at 70–89 shows a compositional bias: low complexity; the sequence is SSFGSRSDSRGKSSFFSDRG. The interaction with VACV protein K7 stretch occupies residues 81–90; that stretch reads KSSFFSDRGS. Phosphoserine occurs at positions 82, 86, and 90. The segment at 88-123 is involved in binding to RNA G-quadruplex; that stretch reads RGSGSRGRFDDRGRSDYDGIGSRGDRSGFGKFERGG. Residues 94 to 130 show a composition bias toward basic and acidic residues; sequence GRFDDRGRSDYDGIGSRGDRSGFGKFERGGNSRWCDK. Residues 100-110 are interaction with IKBKE; it reads GRSDYDGIGSR. Residues 100 to 662 are interaction with GSK3B; sequence GRSDYDGIGS…NSQGVDWWGN (563 aa). R101 is subject to Omega-N-methylarginine. A Phosphoserine; by IKKE modification is found at S102. The residue at position 104 (Y104) is a Phosphotyrosine. R110 bears the Omega-N-methylarginine mark. K118 is modified (N6-acetyllysine). Residue S131 is modified to Phosphoserine. Positions 139-172 are interaction with CHUK; the sequence is PLPPSERLEQELFSGGNTGINFEKYDDIPVEATG. Residues 180 to 208 carry the Q motif motif; sequence ESFSDVEMGEIIMGNIELTRYTRPTPVQK. Phosphoserine; by TBK1; in vitro is present on S181. S183 carries the post-translational modification Phosphoserine; by TBK1. 200–207 lines the ATP pocket; it reads YTRPTPVQ. The Helicase ATP-binding domain occupies 211–403; sequence IPIIKEKRDL…RDFLDEYIFL (193 aa). K215 is covalently cross-linked (Glycyl lysine isopeptide (Lys-Gly) (interchain with G-Cter in SUMO2)). An ATP-binding site is contributed by 224 to 231; it reads AQTGSGKT. Residue S240 is modified to Phosphoserine; by TBK1; in vitro. An involved in stimulation of ATPase activity by DNA and RNA, nucleic acid binding and unwinding and HIV-1 replication region spans residues 250 to 259; sequence ALRAMKENGR. Position 269 is a phosphoserine; by TBK1; in vitro (S269). Positions 347 to 350 match the DEAD box motif; sequence DEAD. Residues 409–662 are interaction with HCV core protein; sequence GSTSENITQK…NSQGVDWWGN (254 aa). A Helicase C-terminal domain is found at 414 to 575; that stretch reads NITQKVVWVE…EVPSWLENMA (162 aa). S429 bears the Phosphoserine; by CSNK1E and TBK1; in vitro mark. T438 is subject to Phosphothreonine; by TBK1; in vitro. S442 and S456 each carry phosphoserine; by TBK1; in vitro. A Phosphothreonine; by CSNK1E; in vitro modification is found at T469. S470 carries the post-translational modification Phosphoserine; by CSNK1E; in vitro. Position 520 is a phosphoserine; by TBK1; in vitro (S520). An interaction with NXF1 region spans residues 536-661; it reads GNLGLATSFF…YNSQGVDWWG (126 aa). Phosphothreonine; by TBK1; in vitro is present on T542. S543 bears the Phosphoserine; by CSNK1E and TBK1; in vitro mark. At R592 the chain carries Omega-N-methylarginine. Phosphoserine is present on residues S594, S605, and S612. The disordered stretch occupies residues 601–634; sequence DYRQSSGASSSSFSSSRASSSRSGGGGHGSSRGF. Over residues 604–622 the composition is skewed to low complexity; that stretch reads QSSGASSSSFSSSRASSSR. 2 positions are modified to omega-N-methylarginine: R617 and R632. Residues 623-634 show a composition bias toward gly residues; it reads SGGGGHGSSRGF.

This sequence belongs to the DEAD box helicase family. DDX3/DED1 subfamily. In terms of assembly, homodimer; can bind RNA as a monomer and as a dimer/oligomer. Interacts with TDRD3. Interacts (when phosphorylated at Ser-102) with IRF3; the interaction facilitates the phosphorylation and activation of IRF3 by IKBKE. Directly interacts with XPO1/CRM1. The interaction with XPO1/CMR1 is dependent on the DDX3X nuclear export signal motif and XPO1 interaction with GTPase RAN in its active GTP-bound form. Weakly interacts with TBKBP1/SINTBAD. Directly interacts with TRAF3; this interaction stimulates TRAF3 'Lys-63' ubiquitination. Interacts with CSNK1E in a Wnt-dependent manner; this interaction greatly enhances CSNK1E affinity for ATP, stimulates its kinase activity and promotes CSNK1E-mediated DVL2 phosphorylation. In the presence of RNA, the interaction is decreased. Also interacts with CSNK1D and stimulates its kinase activity. Interacts with TRPV4; this interaction is decreased when the TRPV4 channel is activated, leading to DDX3X relocalization to the nucleus. Interacts with MAP3K14/NIK. Directly interacts with CHUK/IKKA after physiological activation of the TLR7 and TLR8 pathways; this interaction enhances CHUK autophosphorylation. May associate with EIF4F complex, composed of at least EIF4A, EIF4E and EIF4G1/EIF4G3. Directly interacts with EIF4E in an RNA-independent manner; this interaction enhances EIF4E cap-binding ability. Directly interacts with EIF4G1 in an RNA-independent manner. DDX3X competes with EIF4G1 for interaction with EIF4E. Interacts with EIF4A1 and EIF2S1 in an RNA-independent manner. Associates with the eukaryotic translation initiation factor 3 (eIF-3) complex, including with EIF3B and EIF3C subunits. Directly interacts with IKBKE/IKKE; this interaction stimulates IKBKE activating autophosphorylation and is induced upon viral infection. Interacts with TBK1. Interacts with SP1; this interaction potentiates SP1-induced CDKN1A/WAF1/CIP1 transcription. Interacts with GSK3A and GSK3B. Interacts with several death receptors, inclusing FAS, TNFRSF10A and TNFRSF10B. Recruited to TNFRSF10B in the absence of receptor stimulation. When TNFRSF10B is stimulated, further recruited to the receptor and cleaved by caspases. A large proteolytic fragment remains associated with TNFRSF10B. Interacts (via C-terminus) with NXF1/TAP; this interaction may be partly involved in DDX3X nuclear export and in NXF1 localization to stress granules. Identified in an mRNP complex, composed of at least DHX9, DDX3X, ELAVL1, HNRNPU, IGF2BP1/2, ILF3, PABPC1, PCBP2, PTBP2, STAU1, STAU2, SYNCRIP and YBX1. The interaction with IGF2BP1/2 is RNA-dependent. Directly interacts with PABPC1/PABP1 in an RNA-independent manner. This interaction increases in stressed cells and decreases during cell recovery. Interacts (via C-terminus) with MAVS/IPS-1; this interaction occurs rapidly, but transiently after Sendai virus infection. The interaction potentiates MAVS-mediated IFNB induction. Interacts with ERCC6/CBS. Interacts with DHX33 in an RNA-independent manner. Interacts with DDX5 in the cytoplasm; this interaction may be more efficient when both proteins are unphosphorylated. Interacts with RIGI/RIG-1. Interacts with IFIH1/MDA5. Interacts with NCAPH; this interaction may be important for the NCAPH localization at condensing chromosomes during mitosis. Interacts with NLRP3 (via NACHT domain) under inflammasome-activating conditions. Interacts with CAPRIN1. Interacts with HNF4A and NR0B2/SHP in an RNA-independent manner; this interaction disrupts the interaction between HNF4 and NR0B2 that forms inactive heterodimers and enhances the formation of active HNF4 homodimers. Interacts with CREBBP/CBP. Interacts with EP300/p300. Interacts with gamma-tubulin. Interacts with phosphorylated TP53. Directly interacts with RELA/p65; this interaction may trap RELA in the cytoplasm, impairing nuclear relocalization upon TNF activating signals. (Microbial infection) Interacts with hepatitis B virus (HBV) polymerase in the cytoplasm; this interaction may inhibit DDX3X interaction with the IKBKE/TBK1 complex, and hence impair IKBKE/TBK1-mediated increase in IFNB production. As to quaternary structure, (Microbial infection) Directly interacts with hepatitis C virus (HCV) core protein in the cytoplasm. In terms of assembly, (Microbial infection) Interacts with vaccinia virus (VACV) protein K7. (Microbial infection) Interacts with HIV-1 protein Rev. As to quaternary structure, (Microbial infection) Interacts with Venezuelan equine encephalitis virus non-structural protein 3. Phosphorylated by TBK1; the phosphorylation is required for the synergistic induction of IFNB mediated by TBK1 and DDX3X. Phosphorylated by IKBKE at Ser-102 after ssRNA viral infection; enhances the induction of INFB promoter by IRF3. The cytoplasmic form is highly phosphorylated in the G1/S phase of the cell cycle and much less at G2/M. Phosphorylation by CSNK1E may inhibit RNA-stimulated ATPase activity. Post-translationally, upon stimulation of death receptors, including TNFRSF10B, recruited to receptors and cleaved by caspases. Proteolytic fragments remain associated with the receptors. This cleavage presumably inactivates DDX3X anti-apoptotic function. In terms of processing, ubiquitinated by RNF39 via 'Lys-48'-linked ubiquitination; leading to proteasomal degradation. In terms of tissue distribution, widely expressed. In testis, expressed in spermatids. Expressed in epidermis and liver (at protein level).

It is found in the cell membrane. The protein resides in the nucleus. It localises to the cytoplasm. The protein localises to the stress granule. Its subcellular location is the inflammasome. It is found in the cell projection. The protein resides in the lamellipodium. It localises to the cytoskeleton. The protein localises to the microtubule organizing center. Its subcellular location is the centrosome. It carries out the reaction ATP + H2O = ADP + phosphate + H(+). Functionally, multifunctional ATP-dependent RNA helicase. The ATPase activity can be stimulated by various ribo-and deoxynucleic acids indicative for a relaxed substrate specificity. In vitro can unwind partially double-stranded DNA with a preference for 5'-single-stranded DNA overhangs. Binds RNA G-quadruplex (rG4s) structures, including those located in the 5'-UTR of NRAS mRNA. Involved in many cellular processes, which do not necessarily require its ATPase/helicase catalytic activities. Involved in transcription regulation. Positively regulates CDKN1A/WAF1/CIP1 transcription in an SP1-dependent manner, hence inhibits cell growth. This function requires its ATPase, but not helicase activity. CDKN1A up-regulation may be cell-type specific. Binds CDH1/E-cadherin promoter and represses its transcription. Potentiates HNF4A-mediated MTTP transcriptional activation; this function requires ATPase, but not helicase activity. Facilitates HNF4A acetylation, possibly catalyzed by CREBBP/EP300, thereby increasing the DNA-binding affinity of HNF4 to its response element. In addition, disrupts the interaction between HNF4 and SHP that forms inactive heterodimers and enhances the formation of active HNF4 homodimers. By promoting HNF4A-induced MTTP expression, may play a role in lipid homeostasis. May positively regulate TP53 transcription. Associates with mRNPs, predominantly with spliced mRNAs carrying an exon junction complex (EJC). Involved in the regulation of translation initiation. Not involved in the general process of translation, but promotes efficient translation of selected complex mRNAs, containing highly structured 5'-untranslated regions (UTR). This function depends on helicase activity. Might facilitate translation by resolving secondary structures of 5'-UTRs during ribosome scanning. Alternatively, may act prior to 43S ribosomal scanning and promote 43S pre-initiation complex entry to mRNAs exhibiting specific RNA motifs, by performing local remodeling of transcript structures located close to the cap moiety. Independently of its ATPase activity, promotes the assembly of functional 80S ribosomes and disassembles from ribosomes prior to the translation elongation process. Positively regulates the translation of cyclin E1/CCNE1 mRNA and consequently promotes G1/S-phase transition during the cell cycle. May activate TP53 translation. Required for endoplasmic reticulum stress-induced ATF4 mRNA translation. Independently of its ATPase/helicase activity, enhances IRES-mediated translation; this activity requires interaction with EIF4E. Independently of its ATPase/helicase activity, has also been shown specifically repress cap-dependent translation, possibly by acting on translation initiation factor EIF4E. Involved in innate immunity, acting as a viral RNA sensor. Binds viral RNAs and promotes the production of type I interferon (IFN-alpha and IFN-beta). Potentiate MAVS/RIGI-mediated induction of IFNB in early stages of infection. Enhances IFNB1 expression via IRF3/IRF7 pathway and participates in NFKB activation in the presence of MAVS and TBK1. Involved in TBK1 and IKBKE-dependent IRF3 activation leading to IFNB induction, acts as a scaffolding adapter that links IKBKE and IRF3 and coordinates their activation. Involved in the TLR7/TLR8 signaling pathway leading to type I interferon induction, including IFNA4 production. In this context, acts as an upstream regulator of IRF7 activation by MAP3K14/NIK and CHUK/IKKA. Stimulates CHUK autophosphorylation and activation following physiological activation of the TLR7 and TLR8 pathways, leading to MAP3K14/CHUK-mediated activatory phosphorylation of IRF7. Also stimulates MAP3K14/CHUK-dependent NF-kappa-B signaling. Negatively regulates TNF-induced IL6 and IL8 expression, via the NF-kappa-B pathway. May act by interacting with RELA/p65 and trapping it in the cytoplasm. May also bind IFNB promoter; the function is independent of IRF3. Involved in both stress and inflammatory responses. Independently of its ATPase/helicase activity, required for efficient stress granule assembly through its interaction with EIF4E, hence promotes survival in stressed cells. Independently of its helicase activity, regulates NLRP3 inflammasome assembly through interaction with NLRP3 and hence promotes cell death by pyroptosis during inflammation. This function is independent of helicase activity. Therefore DDX3X availability may be used to interpret stress signals and choose between pro-survival stress granules and pyroptotic NLRP3 inflammasomes and serve as a live-or-die checkpoint in stressed cells. In association with GSK3A/B, negatively regulates extrinsic apoptotic signaling pathway via death domain receptors, including TNFRSF10B, slowing down the rate of CASP3 activation following death receptor stimulation. Cleavage by caspases may inactivate DDX3X and relieve the inhibition. Independently of its ATPase/helicase activity, allosteric activator of CSNK1E. Stimulates CSNK1E-mediated phosphorylation of DVL2, thereby involved in the positive regulation of Wnt/beta-catenin signaling pathway. Also activates CSNK1A1 and CSNK1D in vitro, but it is uncertain if these targets are physiologically relevant. ATPase and casein kinase-activating functions are mutually exclusive. May be involved in mitotic chromosome segregation. Its function is as follows. (Microbial infection) Facilitates hepatitis C virus (HCV) replication. During infection, HCV core protein inhibits the interaction between MAVS and DDX3X and therefore impairs MAVS-dependent INFB induction and might recruit DDX3X to HCV replication complex. In terms of biological role, (Microbial infection) Facilitates HIV-1 replication. Acts as a cofactor for XPO1-mediated nuclear export of HIV-1 Rev RNAs. This function is strongly stimulated in the presence of TBK1 and requires DDX3X ATPase activity. (Microbial infection) Facilitates Zika virus (ZIKV) replication. Functionally, (Microbial infection) Facilitates Dengue virus (DENV) replication. Its function is as follows. (Microbial infection) Facilitates Venezuelan equine encephalitis virus (VEEV) replication. The sequence is that of ATP-dependent RNA helicase DDX3X (DDX3X) from Homo sapiens (Human).